The chain runs to 56 residues: uncharacterized protein (56 aa).

The next 2 helical transmembrane spans lie at 6 to 26 (VILLAVMICLVSAITVFLLNG) and 29 to 49 (VDFLDIGGTIIGCFLGIFVVV).

It is found in the cell membrane. This is an uncharacterized protein from Bacillus subtilis (strain 168).